Here is a 414-residue protein sequence, read N- to C-terminus: Nuclear hormone receptor family member nhr-213 (414 aa).

A DNA-binding region (nuclear receptor) is located at residues 21 to 99 (IVLCKVCALS…LGMTPENVQF (79 aa)). 2 consecutive NR C4-type zinc fingers follow at residues 24–44 (CKVC…CRAC) and 62–82 (CKKG…CRLC). The NR LBD domain occupies 162-414 (SAAKKMNSLE…DFSDPDIFDC (253 aa)).

The protein belongs to the nuclear hormone receptor family.

Its subcellular location is the nucleus. Orphan nuclear receptor. The chain is Nuclear hormone receptor family member nhr-213 (nhr-213) from Caenorhabditis elegans.